A 424-amino-acid polypeptide reads, in one-letter code: Glutamyl-tRNA(Gln) amidotransferase subunit D (424 aa).

Residues 56-78 (GETANGSRNGGKGCKTNEEELPE) are disordered. Positions 84–413 (PKIAILSTGG…EKAAGMLRED (330 aa)) constitute an Asparaginase/glutaminase domain. Catalysis depends on residues Thr-94, Thr-170, Asp-171, and Lys-247.

Belongs to the asparaginase 1 family. GatD subfamily. In terms of assembly, heterodimer of GatD and GatE.

It catalyses the reaction L-glutamyl-tRNA(Gln) + L-glutamine + ATP + H2O = L-glutaminyl-tRNA(Gln) + L-glutamate + ADP + phosphate + H(+). Allows the formation of correctly charged Gln-tRNA(Gln) through the transamidation of misacylated Glu-tRNA(Gln) in organisms which lack glutaminyl-tRNA synthetase. The reaction takes place in the presence of glutamine and ATP through an activated gamma-phospho-Glu-tRNA(Gln). The GatDE system is specific for glutamate and does not act on aspartate. The sequence is that of Glutamyl-tRNA(Gln) amidotransferase subunit D from Methanosarcina acetivorans (strain ATCC 35395 / DSM 2834 / JCM 12185 / C2A).